Reading from the N-terminus, the 500-residue chain is ERAD-associated E3 ubiquitin-protein ligase HRD1 (500 aa).

The Cytoplasmic portion of the chain corresponds to 1 to 3; it reads MIR. The chain crosses the membrane as a helical span at residues 4 to 24; sequence LQTYAAFSLMATATAVYYAFS. Residues 25 to 40 lie on the Lumenal side of the membrane; that stretch reads SREQFYPAMVYLSTSK. The chain crosses the membrane as a helical span at residues 41 to 61; the sequence is ICFVLLLNTGLVAMCVAWQLV. The Cytoplasmic portion of the chain corresponds to 62–98; the sequence is KRLFLGTLREAEVERLNEQAWREVVEILFAVTIFRQD. The helical transmembrane segment at 99 to 119 threads the bilayer; it reads FSVSFLAMVAALLLVKALHWL. At 120–135 the chain is on the lumenal side; the sequence is AQKRVEYIETTPSVPM. Residues 136–156 form a helical membrane-spanning segment; sequence LSHARIVSFMLFLLVVDCLFL. The Cytoplasmic segment spans residues 157-170; sequence SNSLRSLIHKREAS. The chain crosses the membrane as a helical span at residues 171 to 191; that stretch reads VAIFFSFEYMILATSTVSTFV. Residues 192–225 lie on the Lumenal side of the membrane; that stretch reads KYIFYVSDMLMEGQWEKKAVYTFYLELISDLVHL. Residues 226-246 form a helical membrane-spanning segment; it reads SLYMLFFIAIFLNYGVPLHLI. At 247–500 the chain is on the cytoplasmic side; the sequence is RELYETFRNF…NENGEHTKSD (254 aa). An RING-type; atypical zinc finger spans residues 292 to 330; sequence CIICREEMTTAKKLLCGHLFHVHCLRSWLERQHTCPTCR. Disordered stretches follow at residues 337–375 and 398–438; these read DNGR…SRRQ and NNLN…SAPT. Low complexity predominate over residues 348-358; that stretch reads VHPGVQPVPGN. Residues 398–426 are compositionally biased toward polar residues; that stretch reads NNLNRYSTPPQSTSNGPQSGEASTSNQSP.

This sequence belongs to the HRD1 family.

The protein localises to the endoplasmic reticulum membrane. It catalyses the reaction S-ubiquitinyl-[E2 ubiquitin-conjugating enzyme]-L-cysteine + [acceptor protein]-L-lysine = [E2 ubiquitin-conjugating enzyme]-L-cysteine + N(6)-ubiquitinyl-[acceptor protein]-L-lysine.. It functions in the pathway protein modification; protein ubiquitination. In terms of biological role, probable component of the HRD1 ubiquitin ligase complex that mediates the rapid degradation of misfolded endoplasmic reticulum (ER) proteins, a process called ER-associated degradation (ERAD). The sequence is that of ERAD-associated E3 ubiquitin-protein ligase HRD1 from Oryza sativa subsp. japonica (Rice).